Here is a 984-residue protein sequence, read N- to C-terminus: E3 ubiquitin-protein ligase BRE1A (984 aa).

The segment at 1 to 34 (MSGAGNKRAAGEPGPSAPPEKKAGVEDSGTTVET) is disordered. A coiled-coil region spans residues 43-90 (TEELDIRTLQTKNRKLAEMLDQRQAIEDELREHIEKLERRQATDDASL). Positions 128–150 (VVPEPEPDSDSNQERKDERERGE) are disordered. The span at 139 to 150 (NQERKDERERGE) shows a compositional bias: basic and acidic residues. Coiled-coil stretches lie at residues 236-378 (ADTL…VKET) and 429-907 (SLHK…TTKK). The disordered stretch occupies residues 506–632 (SDLSKIRSRS…KHEDGRKKEA (127 aa)). The span at 514-526 (RSGSALLQSQSST) shows a compositional bias: polar residues. 2 stretches are compositionally biased toward basic and acidic residues: residues 527 to 540 (EDTKEEPPEIKQEP) and 558 to 632 (SEVK…KKEA). The RING-type zinc finger occupies 931-970 (CPCCNMRKKDAVLTKCFHVFCFECVKTRYDTRQRKCPKCN).

This sequence belongs to the BRE1 family. In terms of assembly, component of the RNF20/40 complex (also known as BRE1 complex).

Its subcellular location is the nucleus. The catalysed reaction is S-ubiquitinyl-[E2 ubiquitin-conjugating enzyme]-L-cysteine + [acceptor protein]-L-lysine = [E2 ubiquitin-conjugating enzyme]-L-cysteine + N(6)-ubiquitinyl-[acceptor protein]-L-lysine.. Its pathway is protein modification; protein ubiquitination. Component of the RNF20/40 E3 ubiquitin-protein ligase complex that mediates monoubiquitination of 'Lys-120' of histone H2B (H2BK120ub1). H2BK120ub1 gives a specific tag for epigenetic transcriptional activation and is also prerequisite for histone H3 'Lys-4' and 'Lys-79' methylation (H3K4me and H3K79me, respectively). The sequence is that of E3 ubiquitin-protein ligase BRE1A (RNF20) from Gallus gallus (Chicken).